Consider the following 226-residue polypeptide: MKDIRIAIDGPASSGKSTVAKIIAKNLGYTYLDTGAMYRSATYLALQNGLTEENVPEILDQLSQYPISFGKAADGSPKVYVGDVDITHPIRDNQVTNNVSWVAAIPEVRQELVSQQQRIAQEGGIIMDGRDIGTVVLPDAELKIFMIASVDERAERRYKENIEKGIPADLETLKKEIAERDYKDSHREVSPLRPAEDAITFDTTGVSIDGVVEFIQEKAKKIIDKG.

10–18 lines the ATP pocket; the sequence is GPASSGKST.

The protein belongs to the cytidylate kinase family. Type 1 subfamily.

The protein resides in the cytoplasm. The enzyme catalyses CMP + ATP = CDP + ADP. It catalyses the reaction dCMP + ATP = dCDP + ADP. The protein is Cytidylate kinase of Streptococcus thermophilus (strain ATCC BAA-491 / LMD-9).